Here is a 141-residue protein sequence, read N- to C-terminus: Large ribosomal subunit protein uL11 (141 aa).

Belongs to the universal ribosomal protein uL11 family. Part of the ribosomal stalk of the 50S ribosomal subunit. Interacts with L10 and the large rRNA to form the base of the stalk. L10 forms an elongated spine to which L12 dimers bind in a sequential fashion forming a multimeric L10(L12)X complex. One or more lysine residues are methylated.

Forms part of the ribosomal stalk which helps the ribosome interact with GTP-bound translation factors. The chain is Large ribosomal subunit protein uL11 from Streptococcus sanguinis (strain SK36).